Reading from the N-terminus, the 355-residue chain is uncharacterized protein (355 aa).

One can recognise a J domain in the interval 9–75 (DYYDILNISV…KLREKYDKLG (67 aa)).

This sequence belongs to the DnaJ family.

The protein localises to the cytoplasm. This is an uncharacterized protein from Schizosaccharomyces pombe (strain 972 / ATCC 24843) (Fission yeast).